Here is a 250-residue protein sequence, read N- to C-terminus: Probable S-methyl-5'-thioinosine phosphorylase (250 aa).

Residues Thr-14 and 56-57 (RH) each bind phosphate. Met-189 contributes to the substrate binding site. Thr-190 lines the phosphate pocket. Substrate is bound at residue 213-215 (NWA).

It belongs to the PNP/MTAP phosphorylase family. MTAP subfamily. In terms of assembly, homotrimer.

It catalyses the reaction S-methyl-5'-thioinosine + phosphate = 5-(methylsulfanyl)-alpha-D-ribose 1-phosphate + hypoxanthine. It participates in purine metabolism; purine nucleoside salvage. Catalyzes the reversible phosphorylation of S-methyl-5'-thioinosine (MTI) to hypoxanthine and 5-methylthioribose-1-phosphate. Involved in the breakdown of S-methyl-5'-thioadenosine (MTA), a major by-product of polyamine biosynthesis. Catabolism of (MTA) occurs via deamination to MTI and phosphorolysis to hypoxanthine. In Xanthomonas campestris pv. campestris (strain ATCC 33913 / DSM 3586 / NCPPB 528 / LMG 568 / P 25), this protein is Probable S-methyl-5'-thioinosine phosphorylase.